The chain runs to 940 residues: Phosphoenolpyruvate carboxylase (940 aa).

Catalysis depends on residues histidine 138 and lysine 603.

Belongs to the PEPCase type 1 family. Mg(2+) is required as a cofactor.

It carries out the reaction oxaloacetate + phosphate = phosphoenolpyruvate + hydrogencarbonate. Functionally, forms oxaloacetate, a four-carbon dicarboxylic acid source for the tricarboxylic acid cycle. This Streptococcus thermophilus (strain ATCC BAA-250 / LMG 18311) protein is Phosphoenolpyruvate carboxylase.